A 238-amino-acid chain; its full sequence is Adenylate dimethylallyltransferase (238 aa).

It belongs to the isopentenyl transferase family.

The catalysed reaction is dimethylallyl diphosphate + AMP = N(6)-(dimethylallyl)adenosine 5'-phosphate + diphosphate. Functionally, transfers dimethylallyl groups to AMP as part of the biosynthesis of cytokinin phytohormones. The polypeptide is Adenylate dimethylallyltransferase (tzs) (Ralstonia solanacearum (Pseudomonas solanacearum)).